The chain runs to 202 residues: FMN-dependent NADH:quinone oxidoreductase 1 (202 aa).

FMN contacts are provided by residues S9, 15–17, 95–98, and 139–142; these read SAS, MYNF, and TSGG.

The protein belongs to the azoreductase type 1 family. In terms of assembly, homodimer. The cofactor is FMN.

It catalyses the reaction 2 a quinone + NADH + H(+) = 2 a 1,4-benzosemiquinone + NAD(+). The enzyme catalyses N,N-dimethyl-1,4-phenylenediamine + anthranilate + 2 NAD(+) = 2-(4-dimethylaminophenyl)diazenylbenzoate + 2 NADH + 2 H(+). Its function is as follows. Quinone reductase that provides resistance to thiol-specific stress caused by electrophilic quinones. In terms of biological role, also exhibits azoreductase activity. Catalyzes the reductive cleavage of the azo bond in aromatic azo compounds to the corresponding amines. The chain is FMN-dependent NADH:quinone oxidoreductase 1 from Pseudomonas syringae pv. tomato (strain ATCC BAA-871 / DC3000).